Reading from the N-terminus, the 476-residue chain is Acidic leucine-rich nuclear phosphoprotein 32-related protein 1 (476 aa).

3 LRR repeats span residues 51-72 (SLEHLSIAGVGVASLAGFPRLR), 73-92 (NLTRLTLSDNRIAGGLDHLV), and 98-119 (SLRDLDLSNNRIQDVGDLSPLA). Residues 131–169 (CPVTRVKDYRSKVFGMIRTLKYLDKMDADENERPESDDD) form the LRRCT domain. The tract at residues 157 to 476 (DADENERPES…VEDLRPFKHH (320 aa)) is disordered. 8 stretches are compositionally biased toward acidic residues: residues 165-194 (ESDDDDDDGDGDGDGEEEEDDDDDEDEDPG), 222-232 (DVDEDESDADE), 252-289 (GDEDEYVEEEDDDDEEDYEEEDDLGEEIDEDGDDEDAV), 299-329 (SDEEEDGIEEEDEEEDEDEEEVEDDGEEAEP), 353-371 (EGEDEDENGEIGEEDEERL), 379-396 (EGNDDDEEDVDDEDEDTE), 415-436 (DAAEADDADEDRDEVDDDDDGG), and 458-467 (GDDDEDDDGV).

This sequence belongs to the ANP32 family.

The sequence is that of Acidic leucine-rich nuclear phosphoprotein 32-related protein 1 from Oryza sativa subsp. japonica (Rice).